The primary structure comprises 282 residues: HTH-type transcriptional activator RhaR (282 aa).

The 99-residue stretch at D179 to L277 folds into the HTH araC/xylS-type domain. 2 consecutive DNA-binding regions (H-T-H motif) follow at residues D196–T217 and I244–T267.

Binds DNA as a dimer.

It localises to the cytoplasm. Functionally, activates expression of the rhaSR operon in response to L-rhamnose. The protein is HTH-type transcriptional activator RhaR of Shigella dysenteriae serotype 1 (strain Sd197).